The primary structure comprises 165 residues: SPbeta prophage-derived uncharacterized protein YorR (165 aa).

The chain is SPbeta prophage-derived uncharacterized protein YorR (yorR) from Bacillus subtilis (strain 168).